A 267-amino-acid chain; its full sequence is MVKIAVCGAAGRMGGRIIAAISETEGAVVSGALERLGHPMVGQDAGFNAGLGAIGVTISDDLTAVVQGCDVLIDFTTPKVSLKNLEVCGLNKKSIVIGSTGFTPEERALAAELAKDIPVVLAPNMSVGVNVCFKVLADVAKILGDDFDVEIVEAHHKMKKDSPSGTAVRMGEVVAEALGRDYNKVANFHREGICGERTKDEIGMQTIRGGDIVGEHTVYFIGMGERIEITHRAHTRDMFSRGSVRAAKWVVSQKPGLYDMQDVLGLR.

Residues 8 to 13 (GAAGRM) and glutamate 34 each bind NAD(+). Arginine 35 is a binding site for NADP(+). Residues 98-100 (GST) and 122-125 (APNM) each bind NAD(+). Histidine 155 functions as the Proton donor/acceptor in the catalytic mechanism. Histidine 156 serves as a coordination point for (S)-2,3,4,5-tetrahydrodipicolinate. Lysine 159 acts as the Proton donor in catalysis. (S)-2,3,4,5-tetrahydrodipicolinate is bound at residue 165–166 (GT).

This sequence belongs to the DapB family.

The protein resides in the cytoplasm. The catalysed reaction is (S)-2,3,4,5-tetrahydrodipicolinate + NAD(+) + H2O = (2S,4S)-4-hydroxy-2,3,4,5-tetrahydrodipicolinate + NADH + H(+). It catalyses the reaction (S)-2,3,4,5-tetrahydrodipicolinate + NADP(+) + H2O = (2S,4S)-4-hydroxy-2,3,4,5-tetrahydrodipicolinate + NADPH + H(+). Its pathway is amino-acid biosynthesis; L-lysine biosynthesis via DAP pathway; (S)-tetrahydrodipicolinate from L-aspartate: step 4/4. In terms of biological role, catalyzes the conversion of 4-hydroxy-tetrahydrodipicolinate (HTPA) to tetrahydrodipicolinate. In Geotalea uraniireducens (strain Rf4) (Geobacter uraniireducens), this protein is 4-hydroxy-tetrahydrodipicolinate reductase.